The sequence spans 427 residues: 3-phosphoshikimate 1-carboxyvinyltransferase (427 aa).

Positions 20, 21, and 25 each coordinate 3-phosphoshikimate. K20 contributes to the phosphoenolpyruvate binding site. The phosphoenolpyruvate site is built by G92 and R120. 3-phosphoshikimate-binding residues include S166, Q168, D312, and K339. Residue Q168 coordinates phosphoenolpyruvate. D312 serves as the catalytic Proton acceptor. Phosphoenolpyruvate-binding residues include R343 and R385.

The protein belongs to the EPSP synthase family. In terms of assembly, monomer.

It is found in the cytoplasm. It carries out the reaction 3-phosphoshikimate + phosphoenolpyruvate = 5-O-(1-carboxyvinyl)-3-phosphoshikimate + phosphate. The protein operates within metabolic intermediate biosynthesis; chorismate biosynthesis; chorismate from D-erythrose 4-phosphate and phosphoenolpyruvate: step 6/7. Its function is as follows. Catalyzes the transfer of the enolpyruvyl moiety of phosphoenolpyruvate (PEP) to the 5-hydroxyl of shikimate-3-phosphate (S3P) to produce enolpyruvyl shikimate-3-phosphate and inorganic phosphate. This chain is 3-phosphoshikimate 1-carboxyvinyltransferase, found in Streptococcus equi subsp. equi (strain 4047).